The chain runs to 168 residues: Thiol peroxidase (168 aa).

The 149-residue stretch at 20–168 (PAVGSQLPAF…DYDKALAALA (149 aa)) folds into the Thioredoxin domain. Cys-62 acts as the Cysteine sulfenic acid (-SOH) intermediate in catalysis. A disulfide bridge links Cys-62 with Cys-96.

It belongs to the peroxiredoxin family. Tpx subfamily. In terms of assembly, homodimer.

The catalysed reaction is a hydroperoxide + [thioredoxin]-dithiol = an alcohol + [thioredoxin]-disulfide + H2O. Thiol-specific peroxidase that catalyzes the reduction of hydrogen peroxide and organic hydroperoxides to water and alcohols, respectively. Plays a role in cell protection against oxidative stress by detoxifying peroxides. This chain is Thiol peroxidase, found in Chlorobaculum tepidum (strain ATCC 49652 / DSM 12025 / NBRC 103806 / TLS) (Chlorobium tepidum).